Consider the following 306-residue polypeptide: Pantothenate kinase (306 aa).

ATP is bound at residue glycine 91 to serine 98.

The protein belongs to the prokaryotic pantothenate kinase family.

Its subcellular location is the cytoplasm. The enzyme catalyses (R)-pantothenate + ATP = (R)-4'-phosphopantothenate + ADP + H(+). It functions in the pathway cofactor biosynthesis; coenzyme A biosynthesis; CoA from (R)-pantothenate: step 1/5. The chain is Pantothenate kinase from Streptococcus pyogenes serotype M5 (strain Manfredo).